The sequence spans 398 residues: Cathepsin D (398 aa).

A signal peptide spans 1–20 (MAPRGLLVLLLLALVGPCAA). Positions 21-63 (LIRIPLTKFTSTRRMLTEVGSEIPDMNAITQFLKFKLGFADLA) are cleaved as a propeptide — activation peptide. In terms of domain architecture, Peptidase A1 spans 78–395 (YYGEIGIGTP…DRDNDSVGFA (318 aa)). Residue D96 is part of the active site. C109 and C116 form a disulfide bridge. Residues N133 and N251 are each glycosylated (N-linked (GlcNAc...) asparagine). Cysteines 274 and 278 form a disulfide. Residue D283 is part of the active site. Cysteines 317 and 354 form a disulfide.

The protein belongs to the peptidase A1 family. As to quaternary structure, consists of a light chain and a heavy chain. In terms of tissue distribution, oocytic yolk, preovulatory follicles, liver.

The protein resides in the lysosome. It catalyses the reaction Specificity similar to, but narrower than, that of pepsin A. Does not cleave the 4-Gln-|-His-5 bond in B chain of insulin.. Acid protease active in intracellular protein breakdown. In chicken it is a key enzyme for yolk formation as it is capable of catalyzing intra oocytic break down of protein components of both vitellogenin and VLDL. The protein is Cathepsin D (CTSD) of Gallus gallus (Chicken).